The primary structure comprises 316 residues: 4-hydroxyphenylacetate decarboxylase activating enzyme (316 aa).

Residues 20–307 (HDGPGCRTTV…QDIFLDNGIA (288 aa)) form the Radical SAM core domain. 7 residues coordinate [4Fe-4S] cluster: Cys34, Cys38, Cys41, Cys60, Cys66, Cys69, and Cys105. Residue 40–42 (WCA) coordinates S-adenosyl-L-methionine. The 4Fe-4S ferredoxin-type domain maps to 84 to 115 (NKPVIDWNICKDCESFECVNSCYYNAFKLCAK). S-adenosyl-L-methionine contacts are provided by residues Gly144, 193–195 (DIK), and His267.

It belongs to the organic radical-activating enzymes family. Monomer. The cofactor is [4Fe-4S] cluster.

The enzyme catalyses glycyl-[protein] + reduced [flavodoxin] + S-adenosyl-L-methionine = glycin-2-yl radical-[protein] + semiquinone [flavodoxin] + 5'-deoxyadenosine + L-methionine + H(+). Functionally, catalyzes activation of 4-hydroxyphenylacetate decarboxylase under anaerobic conditions by generation of an organic free radical on a glycine residue, via a homolytic cleavage of S-adenosyl-L-methionine (SAM). The sequence is that of 4-hydroxyphenylacetate decarboxylase activating enzyme from Clostridioides difficile (strain 630) (Peptoclostridium difficile).